We begin with the raw amino-acid sequence, 340 residues long: Glyceraldehyde-3-phosphate dehydrogenase, cytosolic (340 aa).

Residues 16-17 (RI), Asp38, and Arg85 each bind NAD(+). Residues 156 to 158 (SCT), Thr187, 216 to 217 (TG), and Arg239 each bind D-glyceraldehyde 3-phosphate. The active-site Nucleophile is the Cys157. Asn321 lines the NAD(+) pocket.

This sequence belongs to the glyceraldehyde-3-phosphate dehydrogenase family. In terms of assembly, homotetramer.

The protein resides in the cytoplasm. It catalyses the reaction D-glyceraldehyde 3-phosphate + phosphate + NAD(+) = (2R)-3-phospho-glyceroyl phosphate + NADH + H(+). It participates in carbohydrate degradation; glycolysis; pyruvate from D-glyceraldehyde 3-phosphate: step 1/5. Its function is as follows. Key enzyme in glycolysis that catalyzes the first step of the pathway by converting D-glyceraldehyde 3-phosphate (G3P) into 3-phospho-D-glyceroyl phosphate. Essential for the maintenance of cellular ATP levels and carbohydrate metabolism. The protein is Glyceraldehyde-3-phosphate dehydrogenase, cytosolic of Taxus baccata (English yew).